A 1238-amino-acid chain; its full sequence is Kinesin-related protein 10 (1238 aa).

Positions 16–374 (SMIVTVRIRP…LKYAQRAKSI (359 aa)) constitute a Kinesin motor domain. 116–123 (GASGAGKT) is an ATP binding site. The span at 417–436 (NNNNSNNNNNNNNNNYFSNS) shows a compositional bias: low complexity. The interval 417 to 503 (NNNNSNNNNN…DGEDSNNRDN (87 aa)) is disordered. The span at 437–464 (FGSCGNKNQPIKQPTPPTSLFHQQNQKY) shows a compositional bias: polar residues. The segment covering 468–497 (DDDDDDDNDQEENNDEVLINEDDEEVDGED) has biased composition (acidic residues). Residues 527-602 (TLKKTQSIQR…NNQWRRKLQS (76 aa)) are a coiled coil. Low complexity-rich tracts occupy residues 726–795 (NDIN…NIIN), 918–934 (LLPSTTTATTTTLSSPL), and 961–971 (NNNNNNNNIAP). 4 disordered regions span residues 726-802 (NDIN…LKPR), 891-971 (EIDD…NIAP), 1134-1156 (TPTSTISSSISTRPITTSTTTST), and 1191-1238 (ATLT…KIIK). A compositionally biased stretch (polar residues) spans 1191 to 1203 (ATLTPNRNNSQIV). Low complexity predominate over residues 1215–1228 (PTSSSSRLLPSSRT). A compositionally biased stretch (polar residues) spans 1229–1238 (TVNTSRKIIK).

This sequence belongs to the TRAFAC class myosin-kinesin ATPase superfamily. Kinesin family.

Its subcellular location is the cytoplasm. It localises to the cytoskeleton. Its function is as follows. Microtubule-associated force-producing protein that plays a role in organelle transport. Its motor activity is directed toward the microtubule's plus end. Cooperates with kif8 and dynein to organize interphase microtubules. This Dictyostelium discoideum (Social amoeba) protein is Kinesin-related protein 10 (kif10).